Consider the following 308-residue polypeptide: uncharacterized protein (308 aa).

This is an uncharacterized protein from Bos taurus (Bovine).